Consider the following 244-residue polypeptide: Carbonyl reductase [NADPH] 2 (244 aa).

11 to 39 (LVTGAGKGIGRDTVKALHVSGARVVAVTR) lines the NADP(+) pocket. Residue Ser136 coordinates substrate. The active-site Proton acceptor is Tyr149. Ser176 bears the Phosphoserine mark.

This sequence belongs to the short-chain dehydrogenases/reductases (SDR) family. In terms of assembly, homotetramer. Lung (ciliated cells, non-ciliated bronchiolar cells and type-II alveolar pneumocytes). Low expression in all extrapulmonary tissues, including adipose tissue.

The protein localises to the mitochondrion matrix. The enzyme catalyses a secondary alcohol + NADP(+) = a ketone + NADPH + H(+). Its activity is regulated as follows. Allosteric enzyme exhibiting negative cooperativity. Activated 2-5 fold by fatty acids. Functionally, may function in the pulmonary metabolism of endogenous carbonyl compounds, such as aliphatic aldehydes and ketones derived from lipid peroxidation, 3-ketosteroids and fatty aldehydes, as well as in xenobiotic metabolism. In Sus scrofa (Pig), this protein is Carbonyl reductase [NADPH] 2 (CBR2).